A 392-amino-acid polypeptide reads, in one-letter code: Zinc finger protein ham-2 (392 aa).

C2H2-type zinc fingers lie at residues 16-39 (FPCSICQKVFCHSSSLSRHRMQAH) and 43-66 (YTCTTCNNEIPSNDTLRSHMYRVH). Residues 72 to 95 (FMCRCCNWAFPDKTSLHIHMQSML) form a C2H2-type 3; degenerate zinc finger. Disordered regions lie at residues 106 to 130 (LAKSSDVVDSTSESGSPRQSPPFSP) and 278 to 303 (HISHDQPSPTVSDSHISGGSSSHSGE). Polar residues predominate over residues 112–123 (VVDSTSESGSPR). Residues 289–303 (SDSHISGGSSSHSGE) are compositionally biased toward low complexity.

The protein resides in the nucleus. Probable transcription factor that acts downstream of egl-15, to promote migration of the HSN motor neurons from the tail to the gonad primordium during HSN cell differentiation. This Caenorhabditis elegans protein is Zinc finger protein ham-2.